The chain runs to 60 residues: Potassium channel toxin alpha-KTx 29.2 (60 aa).

The first 28 residues, 1–28 (MKSVCGVLIILVVLTTMLSISTFSTVGA), serve as a signal peptide directing secretion. 3 disulfides stabilise this stretch: Cys-32-Cys-51, Cys-40-Cys-56, and Cys-44-Cys-58.

The protein belongs to the short scorpion toxin superfamily. Potassium channel inhibitor family. Alpha-KTx 29 subfamily. Expressed by the venom gland.

It localises to the secreted. Weakly inhibits the Kv1.3/KCNA3 channel (1 uM of thetoxin inhibits currents by 13.2%) and Kv7.1/KCNQ1 channel (10 uM of the toxin inhibits currents by 27.7%). This Lychas mucronatus (Chinese swimming scorpion) protein is Potassium channel toxin alpha-KTx 29.2.